The primary structure comprises 93 residues: UPF0250 protein PA3998 (93 aa).

The protein belongs to the UPF0250 family.

The chain is UPF0250 protein PA3998 from Pseudomonas aeruginosa (strain ATCC 15692 / DSM 22644 / CIP 104116 / JCM 14847 / LMG 12228 / 1C / PRS 101 / PAO1).